The chain runs to 301 residues: Protein FdhE homolog (301 aa).

The protein belongs to the FdhE family.

The protein resides in the cytoplasm. In terms of biological role, necessary for formate dehydrogenase activity. In Shewanella baltica (strain OS185), this protein is Protein FdhE homolog.